A 247-amino-acid chain; its full sequence is Cell division protein ZapD (247 aa).

Belongs to the ZapD family. In terms of assembly, interacts with FtsZ.

It localises to the cytoplasm. Cell division factor that enhances FtsZ-ring assembly. Directly interacts with FtsZ and promotes bundling of FtsZ protofilaments, with a reduction in FtsZ GTPase activity. The polypeptide is Cell division protein ZapD (Klebsiella pneumoniae subsp. pneumoniae (strain ATCC 700721 / MGH 78578)).